A 116-amino-acid polypeptide reads, in one-letter code: Nitrogenase-stabilizing/protective protein NifW (116 aa).

The protein belongs to the NifW family. Homotrimer; associates with NifD.

Its function is as follows. May protect the nitrogenase Fe-Mo protein from oxidative damage. The protein is Nitrogenase-stabilizing/protective protein NifW of Rhodopseudomonas palustris (strain ATCC BAA-98 / CGA009).